Here is a 148-residue protein sequence, read N- to C-terminus: UPF0178 protein lpp0103 (148 aa).

This sequence belongs to the UPF0178 family.

This Legionella pneumophila (strain Paris) protein is UPF0178 protein lpp0103.